The sequence spans 181 residues: Alkyl hydroperoxide reductase AhpD (181 aa).

Cys-130 functions as the Proton donor in the catalytic mechanism. Cys-130 and Cys-133 are oxidised to a cystine. The active-site Cysteine sulfenic acid (-SOH) intermediate is the Cys-133.

The protein belongs to the AhpD family.

It catalyses the reaction N(6)-[(R)-dihydrolipoyl]-L-lysyl-[lipoyl-carrier protein] + a hydroperoxide = N(6)-[(R)-lipoyl]-L-lysyl-[lipoyl-carrier protein] + an alcohol + H2O. In terms of biological role, antioxidant protein with alkyl hydroperoxidase activity. Required for the reduction of the AhpC active site cysteine residues and for the regeneration of the AhpC enzyme activity. This chain is Alkyl hydroperoxide reductase AhpD, found in Gluconacetobacter diazotrophicus (strain ATCC 49037 / DSM 5601 / CCUG 37298 / CIP 103539 / LMG 7603 / PAl5).